A 358-amino-acid polypeptide reads, in one-letter code: MVDGTLLLLLSEALALTQTWAGSHSLKYFHTSVSRPGRGEPRFISVGYVDDTQFVRFDNDAASPRMVPRAPWMEQEGSEYWDRETRSARDTAQIFRVNLRTLRGYYNQSEAGSHTLQWMHGCELGPDGRFLRGYEQFAYDGKDYLTLNEDLRSWTAVDTAAQISEQKSNDASEAEHQRAYLEDTCVEWLHKYLEKGKETLLHLEPPKTHVTHHPISDHEATLRCWALGFYPAEITLTWQQDGEGHTQDTELVETRPAGDGTFQKWAAVVVPSGEEQRYTCHVQHEGLPEPVTLRWKPASQPTIPIVGIIAGLVLLGSVVSGAVVAAVIWRKKSSGGKGGSYSKAEWSDSAQGSESHSL.

An N-terminal signal peptide occupies residues 1-21; sequence MVDGTLLLLLSEALALTQTWA. An alpha-1 region spans residues 22–111; the sequence is GSHSLKYFHT…LRGYYNQSEA (90 aa). Topologically, residues 22-305 are extracellular; the sequence is GSHSLKYFHT…KPASQPTIPI (284 aa). The a peptide antigen site is built by Y28, E84, S87, N98, and Y105. Residue N107 is glycosylated (N-linked (GlcNAc...) asparagine). Positions 112 to 203 are alpha-2; sequence GSHTLQWMHG…EKGKETLLHL (92 aa). C122 and C185 are disulfide-bonded. A peptide antigen is bound by residues S164, K167, Q177, Y180, and Y192. Positions 204–295 are alpha-3; sequence EPPKTHVTHH…GLPEPVTLRW (92 aa). The Ig-like C1-type domain maps to 206 to 294; that stretch reads PKTHVTHHPI…EGLPEPVTLR (89 aa). Cysteines 224 and 280 form a disulfide. Residues 296–305 are connecting peptide; sequence KPASQPTIPI. Residues 306–329 traverse the membrane as a helical segment; sequence VGIIAGLVLLGSVVSGAVVAAVIW. Residues 330-358 lie on the Cytoplasmic side of the membrane; it reads RKKSSGGKGGSYSKAEWSDSAQGSESHSL. Positions 333–358 are disordered; that stretch reads SSGGKGGSYSKAEWSDSAQGSESHSL. Residues 348–358 are compositionally biased toward polar residues; that stretch reads DSAQGSESHSL. At S353 the chain carries Phosphoserine.

This sequence belongs to the MHC class I family. Forms a heterotrimer with B2M and a self- or a pathogen-derived peptide (peptide-bound HLA-E-B2M). Similarly to MHC class Ia assembly, HLA-E-B2M heterodimer interacts with components of the antigen processing machinery TAPBP and TAP1-TAP2 complex; this interaction is required for peptide loading and translocation to the cell surface. Interacts with CALCR; this interaction is required for appropriate folding. The optimum binding peptide is a nonamer (VL9) that is primarily derived from amino-acid residues 3-11 of the signal sequences of most HLA-A, -B, -C and -G molecules. The VL9 peptide anchors to five main sites in the peptide-binding groove of HLA-E. Peptide-bound HLA-E-B2M complex interacts with KLRD1-KLRC1 receptor on NK cells. Binds with lower affinity to activating KLRD1-KLRC2. The common subunit KLRC1 plays a prominent role in directly interacting with HLA-E. Peptide-bound HLA-E-B2M interacts with the alpha-beta TCR on unconventional CD8+ T cells. Peptide-free HLA-E interacts with HLA-F-B2M complex; this interaction may regulate the intracellular trafficking and the stability of peptide-free MHC class I open conformers (OCs). In terms of processing, N-glycosylated. Post-translationally, the soluble form (sHLA-E) can be partly produced by proteolytic cleavage at the cell surface (shedding) by a matrix metalloproteinase. Alternative splicing is also suggested as a mechanism for generation of sHLA-E, although it remains to be proved. As to expression, expressed in secretory endometrial cells during pregnancy (at protein level). The expression in nonlymphoid tissues is restricted to endothelial cells from all types of vessels, including arteries, veins, capillaries, and lymphatics (at protein level). In lymphoid organs, it is mainly expressed in endothelial venules, B and T cells, monocytes, macrophages, NK cells and megakaryocytes (at protein level).

The protein localises to the cell membrane. Its subcellular location is the golgi apparatus membrane. It is found in the secreted. Non-classical major histocompatibility class Ib molecule involved in immune self-nonself discrimination. In complex with B2M/beta-2-microglobulin binds nonamer self-peptides derived from the signal sequence of classical MHC class Ia molecules (VL9 peptides - VMAPRT[V/L][L/V/I/F]L). Peptide-bound HLA-E-B2M heterotrimeric complex primarily functions as a ligand for natural killer (NK) cell inhibitory receptor KLRD1-KLRC1, enabling NK cells to monitor the expression of other MHC class I molecules in healthy cells and to tolerate self. Upon cellular stress, preferentially binds signal sequence-derived peptides from stress-induced chaperones and is no longer recognized by NK cell inhibitory receptor KLRD1-KLRC1, resulting in impaired protection from NK cells. Binds signal sequence-derived peptides from non-classical MHC class Ib HLA-G molecules and acts as a ligand for NK cell activating receptor KLRD1-KLRC2, likely playing a role in the generation and effector functions of adaptive NK cells and in maternal-fetal tolerance during pregnancy. Besides self-peptides, can also bind and present pathogen-derived peptides conformationally similar to VL9 peptides to alpha-beta T cell receptor (TCR) on unconventional CD8-positive cytotoxic T cells, ultimately triggering antimicrobial immune response. Presents HIV gag peptides (immunodominant KAFSPEVIPMF and subdominant KALGPAATL epitopes) predominantly to CD8-positive T cell clones expressing a TRAV17-containing TCR, triggering HLA-E-restricted T cell responses. Presents mycobacterial peptides to HLA-E-restricted CD8-positive T cells eliciting both cytotoxic and immunoregulatory functions. Functionally, (Microbial infection) Viruses like human cytomegalovirus have evolved an escape mechanism whereby virus-induced down-regulation of host MHC class I molecules is coupled to the binding of viral peptides to HLA-E, restoring HLA-E expression and inducing HLA-E-dependent NK cell immune tolerance to infected cells. In terms of biological role, (Microbial infection) May bind HIV-1 gag/Capsid protein p24-derived peptide (AISPRTLNA) on infected cells and may inhibit NK cell cytotoxicity, a mechanism that allows HIV-1 to escape immune recognition. Its function is as follows. (Microbial infection) Upon SARS-CoV-2 infection, may contribute to functional exhaustion of cytotoxic NK cells and CD8-positive T cells. Binds SARS-CoV-2 S/Spike protein S1-derived peptide (LQPRTFLL) expressed on the surface of lung epithelial cells, inducing NK cell exhaustion and dampening of antiviral immune surveillance. The chain is HLA class I histocompatibility antigen, alpha chain E from Homo sapiens (Human).